A 338-amino-acid polypeptide reads, in one-letter code: D-erythrose-4-phosphate dehydrogenase (338 aa).

11–12 (RI) is an NAD(+) binding site. Residues 153-155 (SCT), arginine 199, 212-213 (TK), and arginine 235 contribute to the substrate site. Cysteine 154 functions as the Nucleophile in the catalytic mechanism. Asparagine 317 lines the NAD(+) pocket.

Belongs to the glyceraldehyde-3-phosphate dehydrogenase family. Epd subfamily. As to quaternary structure, homotetramer.

Its subcellular location is the cytoplasm. It catalyses the reaction D-erythrose 4-phosphate + NAD(+) + H2O = 4-phospho-D-erythronate + NADH + 2 H(+). Its pathway is cofactor biosynthesis; pyridoxine 5'-phosphate biosynthesis; pyridoxine 5'-phosphate from D-erythrose 4-phosphate: step 1/5. Functionally, catalyzes the NAD-dependent conversion of D-erythrose 4-phosphate to 4-phosphoerythronate. This Shewanella sp. (strain MR-4) protein is D-erythrose-4-phosphate dehydrogenase.